We begin with the raw amino-acid sequence, 299 residues long: Aspartate carbamoyltransferase catalytic subunit (299 aa).

Carbamoyl phosphate-binding residues include Arg54 and Thr55. Lys83 serves as a coordination point for L-aspartate. 3 residues coordinate carbamoyl phosphate: Arg104, His132, and Gln135. Residues Arg165 and Arg222 each contribute to the L-aspartate site. Positions 261 and 262 each coordinate carbamoyl phosphate.

This sequence belongs to the aspartate/ornithine carbamoyltransferase superfamily. ATCase family. In terms of assembly, heterooligomer of catalytic and regulatory chains.

The enzyme catalyses carbamoyl phosphate + L-aspartate = N-carbamoyl-L-aspartate + phosphate + H(+). It participates in pyrimidine metabolism; UMP biosynthesis via de novo pathway; (S)-dihydroorotate from bicarbonate: step 2/3. Functionally, catalyzes the condensation of carbamoyl phosphate and aspartate to form carbamoyl aspartate and inorganic phosphate, the committed step in the de novo pyrimidine nucleotide biosynthesis pathway. This is Aspartate carbamoyltransferase catalytic subunit from Archaeoglobus fulgidus (strain ATCC 49558 / DSM 4304 / JCM 9628 / NBRC 100126 / VC-16).